The primary structure comprises 266 residues: MLTYPQIDPVALAIGPLKIHWYGLMYLIGIGGAWLLASRRMKRFDPSWTKERLSDLVFWVACGVILGGRLGYVLFYNLDEYIANPTLIFEVWKGGMSFHGGLLGVMLAVWWFGKRHGKSFFQLMDFIAPLVPIGLGAGRIGNFINSELWGKVSDVPWAMVFPNGGPLPRHPSQLYQFALEGVALFVILWLFTRKPRPTASVSGLFVLCYGIFRFVVEFVRVPDAQLGYLAWGWLTMGQVLCVPMVLAGIALMVWAYRRDAAQPKAA.

7 helical membrane-spanning segments follow: residues 10 to 30 (VALAIGPLKIHWYGLMYLIGI), 56 to 76 (LVFWVACGVILGGRLGYVLFY), 92 to 112 (WKGGMSFHGGLLGVMLAVWWF), 120 to 140 (FFQLMDFIAPLVPIGLGAGRI), 171 to 191 (PSQLYQFALEGVALFVILWLF), 199 to 219 (ASVSGLFVLCYGIFRFVVEFV), and 233 to 253 (WLTMGQVLCVPMVLAGIALMV). Residue arginine 139 participates in a 1,2-diacyl-sn-glycero-3-phospho-(1'-sn-glycerol) binding.

The protein belongs to the Lgt family.

Its subcellular location is the cell inner membrane. It carries out the reaction L-cysteinyl-[prolipoprotein] + a 1,2-diacyl-sn-glycero-3-phospho-(1'-sn-glycerol) = an S-1,2-diacyl-sn-glyceryl-L-cysteinyl-[prolipoprotein] + sn-glycerol 1-phosphate + H(+). It functions in the pathway protein modification; lipoprotein biosynthesis (diacylglyceryl transfer). Functionally, catalyzes the transfer of the diacylglyceryl group from phosphatidylglycerol to the sulfhydryl group of the N-terminal cysteine of a prolipoprotein, the first step in the formation of mature lipoproteins. The polypeptide is Phosphatidylglycerol--prolipoprotein diacylglyceryl transferase (Pseudomonas paraeruginosa (strain DSM 24068 / PA7) (Pseudomonas aeruginosa (strain PA7))).